The sequence spans 418 residues: cAMP-dependent protein kinase type II-beta regulatory subunit (418 aa).

The segment at 2–153 (SIEIPAGLTE…RLQEACKDIL (152 aa)) is dimerization and phosphorylation. Over residues 48–57 (TARFGHEGRT) the composition is skewed to basic and acidic residues. The segment at 48 to 96 (TARFGHEGRTWGDLGAAAGGGTPSKGVNFAEEPMQSDSEDGEEEEAAPA) is disordered. Thr69 is modified (phosphothreonine). A phosphoserine mark is found at Ser83, Ser85, and Ser114. Residues 84–94 (DSEDGEEEEAA) show a composition bias toward acidic residues. 3',5'-cyclic AMP-binding positions include 154–275 (LFKN…ESLP), Glu223, Arg232, 276–418 (FLKS…EPTA), Glu352, and Arg361.

This sequence belongs to the cAMP-dependent kinase regulatory chain family. In terms of assembly, the inactive form of the enzyme is composed of two regulatory chains and two catalytic chains. Activation by cAMP produces two active catalytic monomers and a regulatory dimer that binds four cAMP molecules. Interacts with PRKACA and PRKACB. Interacts with the phosphorylated form of PJA2. Forms a complex composed of PRKAR2B, GSK3B and GSKIP through GSKIP interaction; facilitates PKA-induced phosphorylation and regulates GSK3B activity. Phosphorylated by the activated catalytic chain. As to expression, four types of regulatory chains are found: I-alpha, I-beta, II-alpha, and II-beta. Their expression varies among tissues and is in some cases constitutive and in others inducible.

Its subcellular location is the cytoplasm. It is found in the cell membrane. Its function is as follows. Regulatory subunit of the cAMP-dependent protein kinases involved in cAMP signaling in cells. Type II regulatory chains mediate membrane association by binding to anchoring proteins, including the MAP2 kinase. This chain is cAMP-dependent protein kinase type II-beta regulatory subunit (PRKAR2B), found in Homo sapiens (Human).